A 387-amino-acid polypeptide reads, in one-letter code: Probable aminomethyltransferase, mitochondrial (387 aa).

The substrate site is built by E219, R248, and Y385.

The protein belongs to the GcvT family. In terms of assembly, the glycine cleavage system is composed of four proteins: P, T, L and H.

Its subcellular location is the mitochondrion. The catalysed reaction is N(6)-[(R)-S(8)-aminomethyldihydrolipoyl]-L-lysyl-[protein] + (6S)-5,6,7,8-tetrahydrofolate = N(6)-[(R)-dihydrolipoyl]-L-lysyl-[protein] + (6R)-5,10-methylene-5,6,7,8-tetrahydrofolate + NH4(+). Its function is as follows. The glycine cleavage system catalyzes the degradation of glycine. This Schizosaccharomyces pombe (strain 972 / ATCC 24843) (Fission yeast) protein is Probable aminomethyltransferase, mitochondrial (gcv1).